A 61-amino-acid polypeptide reads, in one-letter code: uncharacterized protein (61 aa).

This is an uncharacterized protein from Saccharomyces cerevisiae (strain ATCC 204508 / S288c) (Baker's yeast).